The sequence spans 622 residues: Sodium-dependent serotonin transporter (622 aa).

The tract at residues 1-53 is disordered; sequence MDRSGSSDFAGAAATTGRSNPAPWSDDKESPNNEDDSNEDDGDHTTPAKVTDP. The Cytoplasmic portion of the chain corresponds to 1 to 82; that stretch reads MDRSGSSDFA…TRETWGQKAE (82 aa). Acidic residues predominate over residues 32–42; sequence NNEDDSNEDDG. 3 helical membrane passes run 83–103, 111–130, and 155–175; these read FLLAVIGFAVDLGNVWRFPYI, AFLVPYCLFLIFGGLPLFYM, and GVGYAICLIDIYMGMYYNTII. Na(+) contacts are provided by Gly89, Ala91, Val92, and Asn96. Topologically, residues 176 to 244 are extracellular; that stretch reads GWAVYYLFAS…NGLDFMGPVK (69 aa). A disulfide bridge links Cys195 with Cys204. N-linked (GlcNAc...) asparagine glycosylation occurs at Asn211. 5 consecutive transmembrane segments (helical) span residues 245-263, 272-289, 325-342, 354-375, and 408-427; these read PTLALCVFGVFVLVYFSLW, VVWVTALAPYVVLIILLV, IFFSLGPGFGTLLALSSY, LITSSINCLTSFLAGFVIFSVL, and MSGSVFWSIIFFLMLITLGL. Residues Ser328, Asn360, Leu425, Asp428, and Ser429 each coordinate Na(+). 4 helical membrane passes run 455–473, 489–509, 530–549, and 568–586; these read LFVLLLLAFIFLCALPTMT, GLAILFVVFVEAAGVFWFYGV, ICWTYISPVFLLTIFIFSIM, and VGWAVTCSSVLCIPMYIIY. The Cytoplasmic portion of the chain corresponds to 587-622; it reads KFFFASKGGCRQRLQESFQPEDNCGSVVPGQQGTSV.

The protein belongs to the sodium:neurotransmitter symporter (SNF) (TC 2.A.22) family. As to expression, expression is specific to cell bodies in the ventral ganglion of the embryonic and larval nervous system.

It is found in the cell membrane. In terms of biological role, terminates the action of serotonin by its high affinity sodium-dependent reuptake into presynaptic terminals. This Drosophila melanogaster (Fruit fly) protein is Sodium-dependent serotonin transporter (SerT).